Consider the following 561-residue polypeptide: Putative transport protein Ent638_1362 (561 aa).

The next 5 membrane-spanning stretches (helical) occupy residues 8–28, 32–52, 66–86, 94–114, and 158–178; these read LLNGNYILLLFVVLALGLCLG, LGSVQLGNSIGVLVVSLLLGQ, FMLFIFCVGVEAGPNFFSIFF, MLALVMVGSALIIALGLGKLF, and HLSLGYALTYLIGLVSLIVAA. RCK C-terminal domains are found at residues 202–288 and 292–373; these read LDTD…SFRN and VFDR…RIGF. 5 helical membrane-spanning segments follow: residues 383–403, 406–426, 447–467, 475–495, and 540–560; these read LLAFCAFFIVGLMIGMITFQF, FSFGVGNAAGLLFAGIMLGFL, FGLMVFMAGVGLSAGSGIGHS, MLVAGLIVSLLPVVICFLFGA, and AIANVLLTLAGTLIIIIWPGL.

This sequence belongs to the AAE transporter (TC 2.A.81) family. YbjL subfamily.

It is found in the cell membrane. The polypeptide is Putative transport protein Ent638_1362 (Enterobacter sp. (strain 638)).